Reading from the N-terminus, the 1780-residue chain is Callose synthase 12 (1780 aa).

At 1–302 the chain is on the cytoplasmic side; that stretch reads MSLRHRTVPP…ERRTFFYLYR (302 aa). A helical membrane pass occupies residues 303–323; sequence SFDRLWVMLALFLQAAIIVAW. Residues 324 to 348 lie on the Extracellular side of the membrane; it reads EEKPDTSSVTRQLWNALKARDVQVR. A helical transmembrane segment spans residues 349-369; sequence LLTVFLTWSGMRLLQAVLDAA. At 370 to 386 the chain is on the cytoplasmic side; it reads SQYPLVSRETKRHFFRM. Residues 387–407 traverse the membrane as a helical segment; that stretch reads LMKVIAAAVWIVAFTVLYTNI. Topologically, residues 408–427 are extracellular; the sequence is WKQKRQDRQWSNAATTKIYQ. Residues 428–448 traverse the membrane as a helical segment; that stretch reads FLYAVGAFLVPEILALALFII. At 449–489 the chain is on the cytoplasmic side; that stretch reads PWMRNFLEETNWKIFFALTWWFQGKSFVGRGLREGLVDNIK. The helical transmembrane segment at 490–510 threads the bilayer; that stretch reads YSTFWIFVLATKFTFSYFLQV. Topologically, residues 511-542 are extracellular; that stretch reads KPMIKPSKLLWNLKDVDYEWHQFYGDSNRFSV. The helical transmembrane segment at 543-563 threads the bilayer; the sequence is ALLWLPVVLIYLMDIQIWYAI. Over 564–1348 the chain is Cytoplasmic; that stretch reads YSSIVGAVVG…FFRMLSFFYT (785 aa). A helical membrane pass occupies residues 1349–1369; it reads TVGFFFNTMMVILTVYAFLWG. Over 1370–1394 the chain is Extracellular; sequence RVYLALSGVEKSALADSTDTNAALG. A helical membrane pass occupies residues 1395-1415; sequence VILNQQFIIQLGLFTALPMIV. Over 1416–1421 the chain is Cytoplasmic; that stretch reads EWSLEE. The helical transmembrane segment at 1422 to 1442 threads the bilayer; it reads GFLLAIWNFIRMQIQLSAVFY. At 1443–1489 the chain is on the extracellular side; it reads TFSMGTRAHYFGRTILHGGAKYRATGRGFVVEHKGFTENYRLYARSH. Residues 1490–1510 traverse the membrane as a helical segment; the sequence is FVKAIELGLILIVYASHSPIA. Topologically, residues 1511 to 1516 are cytoplasmic; that stretch reads KDSLIY. A helical transmembrane segment spans residues 1517 to 1537; sequence IAMTITSWFLVISWIMAPFVF. At 1538 to 1588 the chain is on the extracellular side; it reads NPSGFDWLKTVYDFEDFMNWIWYQGRISTKSEQSWEKWWYEEQDHLRNTGK. The helical transmembrane segment at 1589–1609 threads the bilayer; the sequence is AGLFVEIILVLRFFFFQYGIV. Residues 1610-1620 are Cytoplasmic-facing; the sequence is YQLKIANGSTS. A helical transmembrane segment spans residues 1621-1641; that stretch reads LFVYLFSWIYIFAIFVLFLVI. Residues 1642–1657 are Extracellular-facing; sequence QYARDKYSAKAHIRYR. Residues 1658 to 1678 form a helical membrane-spanning segment; sequence LVQFLLIVLAILVIVALLEFT. The Cytoplasmic portion of the chain corresponds to 1679-1681; that stretch reads HFS. A helical membrane pass occupies residues 1682-1702; that stretch reads FIDIFTSLLAFIPTGWGILLI. Residues 1703-1728 are Extracellular-facing; that stretch reads AQTQRKWLKNYTIFWNAVVSVARMYD. N-linked (GlcNAc...) asparagine glycosylation is present at asparagine 1712. The chain crosses the membrane as a helical span at residues 1729–1749; it reads ILFGILIMVPVAFLSWMPGFQ. At 1750–1780 the chain is on the cytoplasmic side; sequence SMQTRILFNEAFSRGLRIMQIVTGKKSKGDV.

The protein belongs to the glycosyltransferase 48 family. In terms of tissue distribution, highly expressed in flowers. Expressed at low levels in roots, leaves, stems, cauline leaves and siliques.

The protein localises to the cell membrane. The catalysed reaction is [(1-&gt;3)-beta-D-glucosyl](n) + UDP-alpha-D-glucose = [(1-&gt;3)-beta-D-glucosyl](n+1) + UDP + H(+). Involved in sporophytic and gametophytic development. Required for normal leaf development. During pollen formation, required for the formation of the callose wall separating the tetraspores of the tetrad (interstitial wall), but not for the callose wall surrounding the pollen mother cells (peripheral wall). Functionally redudant to CALS11 (GSL1). May play a role later in pollen grain maturation. Required for callose formation induced by wounding and pathogen attack. May interfere with salicylic acid-induced signaling pathway during defense response. During plant growth and development, callose is found as a transitory component of the cell plate in dividing cells, is a major component of pollen mother cell walls and pollen tubes, and is found as a structural component of plasmodesmatal canals. The protein is Callose synthase 12 (CALS12) of Arabidopsis thaliana (Mouse-ear cress).